The primary structure comprises 288 residues: Eukaryotic translation initiation factor 3 subunit G (288 aa).

2 disordered regions span residues 1-33 and 156-197; these read MSKLGNRADWADDEEFDDPSALPPQQITTNKDG and DEPT…GGER. Positions 208–286 constitute an RRM domain; the sequence is ATLRVTNVSE…LILRVEFAKR (79 aa).

The protein belongs to the eIF-3 subunit G family. As to quaternary structure, component of the eukaryotic translation initiation factor 3 (eIF-3) complex.

The protein localises to the cytoplasm. Functionally, RNA-binding component of the eukaryotic translation initiation factor 3 (eIF-3) complex, which is involved in protein synthesis of a specialized repertoire of mRNAs and, together with other initiation factors, stimulates binding of mRNA and methionyl-tRNAi to the 40S ribosome. The eIF-3 complex specifically targets and initiates translation of a subset of mRNAs involved in cell proliferation. This subunit can bind 18S rRNA. The polypeptide is Eukaryotic translation initiation factor 3 subunit G (tif35) (Aspergillus niger (strain ATCC MYA-4892 / CBS 513.88 / FGSC A1513)).